Consider the following 278-residue polypeptide: MKFRALMQDPLYMKEFQAIVATLTKLAKDCVMILGSRQMHFIVNEDQSSAASPLVWAGITAEEYFPEYRMEAAHPDQEYIVLGVSSANLGRALSVLRGGGVNSCKLKLQRIQFPCISVIASVLTSSSTEAREVVHDVPVTIIPGSDWSAYVVPRVPNSQLALGLPSLRLLKSLIDKLKNISPSLEFQVNVDGELNVIATSEMSTVTSRFQKLLIRTVSGSQQEASCSVDSRKASAFFGALQLPNEELTIGIDREHSIHLQIDVRQDVVLHSILPAVCM.

This sequence belongs to the HUS1 family. In terms of assembly, component of the 9-1-1 checkpoint clamp complex consisting of Rad9 isoform A, Rad1 and Hus1-like; the interactions with Rad1 and Rad9 are direct. This complex probably also forms with Rad9 isoform B, however 9-1-1 complex containing Rad9 isoform A localizes to the nuclear periphery. Expressed in ovary.

Its subcellular location is the cytoplasm. It is found in the nucleus envelope. Functionally, component of the 9-1-1 checkpoint clamp complex. Involved in both meiotic and somatic DNA damage responses. Essential for activation of the meiotic checkpoint in response to double-strand DNA breaks; required for the S-phase checkpoint but not the G2-M phase checkpoint. Involved in double strand break repair by homologous recombination during meiosis; influences the organization of chromosomal DNA in the meiotic nucleus. This Drosophila melanogaster (Fruit fly) protein is Checkpoint protein Hus1-like.